A 328-amino-acid chain; its full sequence is 2-oxoglutarate-dependent dioxygenase gloE (328 aa).

In terms of domain architecture, Fe2OG dioxygenase spans 170–271 (TRTNLTFLKY…RYTLAYFLRP (102 aa)). Fe cation contacts are provided by H194, D196, and H249. R262 contributes to the 2-oxoglutarate binding site.

The protein belongs to the iron/ascorbate-dependent oxidoreductase family. Requires Fe(2+) as cofactor.

It functions in the pathway mycotoxin biosynthesis. Its function is as follows. 2-oxoglutarate-dependent dioxygenase; part of the gene cluster that mediates the biosynthesis of pneumocandins, lipohexapeptides of the echinocandin family that prevent fungal cell wall formation by non-competitive inhibition of beta-1,3-glucan synthase. The 10,12-dimethylmyristoyl side chain is synthesized by the reducing polyketide synthase gloL/GLPKS4. The thioesterase gloN/GLHYD exclusively interacts with gloL/GLPKS4 to maintain turnover of the polyketide side chain. The 10R,12S-dimethylmyristic acid is then transferred to the first thiolation domain of the nonribosomal peptide synthetase gloA/GLNRPS4 by the acyl-AMP ligase gloD/GLligase, followed by its acylation to L-ornithine to trigger elongation of the cyclic hexapeptide. L-ornithine, 4R-hydroxyl-L-proline (generated from L-proline by the dioxygenase gloF/GLOXY2), 3S-hydroxyl-L-homotyrosine (generated by gloG/GLHtyB, gloH/GLHtyA, gloI/GLHtyC, gloJ/GLHtyD and hydroxylated at C-3 by the dioxygenase gloM/GLOXY1), 3R-hydroxyl-L-glutamine (generated from L-glutamine probably by the dioxygenase gloE/GLOXY3) and 3S-hydroxyl-L-proline (generated from L-proline by the dioxygenase gloF/GLOXY2 to yield pneumocandin B0), or 3S-hydroxyl-4S-methyl-L-proline (generated from L-leucine by the dioxygenase gloC/GLOXY4 to yield pneumocandin A0) are sequentially added to the growing chain. The last C domain of gloA/GLNRPS4 is proposed to be responsible for cyclization by condensation to form the peptide bond between L-ornithine and 3S-hydroxyl-4S-methyl-L-proline (for pneumocandin A0) or 3S-hydroxyl-L-proline (for pneumocandin B0). Finally, the subsequent C-4 hydroxylation of 3S-hydroxyl-L-homotyrosine and L-ornithine dihydroxylation at C-4 and C-5 are performed by the cytochrome P450 monooxygenases gloP/GLP450-1 and gloO/GLP450-2, respectively. In Glarea lozoyensis (strain ATCC 20868 / MF5171), this protein is 2-oxoglutarate-dependent dioxygenase gloE.